The following is an 85-amino-acid chain: Small ribosomal subunit protein uS17 (85 aa).

It belongs to the universal ribosomal protein uS17 family. In terms of assembly, part of the 30S ribosomal subunit.

Functionally, one of the primary rRNA binding proteins, it binds specifically to the 5'-end of 16S ribosomal RNA. The chain is Small ribosomal subunit protein uS17 from Natranaerobius thermophilus (strain ATCC BAA-1301 / DSM 18059 / JW/NM-WN-LF).